Here is a 365-residue protein sequence, read N- to C-terminus: Cobalt-precorrin-5B C(1)-methyltransferase (365 aa).

It belongs to the CbiD family.

The enzyme catalyses Co-precorrin-5B + S-adenosyl-L-methionine = Co-precorrin-6A + S-adenosyl-L-homocysteine. It participates in cofactor biosynthesis; adenosylcobalamin biosynthesis; cob(II)yrinate a,c-diamide from sirohydrochlorin (anaerobic route): step 6/10. Catalyzes the methylation of C-1 in cobalt-precorrin-5B to form cobalt-precorrin-6A. The polypeptide is Cobalt-precorrin-5B C(1)-methyltransferase (Pseudomonas fluorescens (strain Pf0-1)).